We begin with the raw amino-acid sequence, 251 residues long: Cell division protein ZapD (251 aa).

It belongs to the ZapD family. As to quaternary structure, interacts with FtsZ.

The protein localises to the cytoplasm. Its function is as follows. Cell division factor that enhances FtsZ-ring assembly. Directly interacts with FtsZ and promotes bundling of FtsZ protofilaments, with a reduction in FtsZ GTPase activity. The polypeptide is Cell division protein ZapD (Burkholderia orbicola (strain MC0-3)).